The following is a 739-amino-acid chain: Cellulose synthase catalytic subunit [UDP-forming] (739 aa).

4 helical membrane passes run 36–55 (VLVVASCVLGAMLLLGIISA), 59–76 (LYSQCLFAAVCFLAVLVL), 83–101 (LAILALVVLSLVASLRYMF), and 116–138 (MFFGYGLVAAEFYALIVLIFGYV). Residues 157–250 (EWPTVDVFIP…YIALFDADHV (94 aa)) are catalytic subdomain A. The active site involves Asp199. Substrate-binding residues include Asp246 and Asp248. A catalytic subdomain B region spans residues 327–387 (EPLLEIGGVA…NQRIRWARGM (61 aa)). Asp343 is a catalytic residue. Helical transmembrane passes span 417 to 436 (FFYGLPRLVFLTAPLAYLIF), 440 to 462 (IFHASALMIVAYVLPHLVHSSLT), 524 to 546 (PYLVLLAVNLIGLGFGIHQLIWG), and 551 to 573 (AVTVAINLTWTLYNLIITSAAVA). One can recognise a PilZ domain in the interval 580 to 677 (QVRSEPRVSA…QSELVRLTFS (98 aa)).

Belongs to the glycosyltransferase 2 family. Requires Mg(2+) as cofactor.

The protein localises to the cell inner membrane. The catalysed reaction is [(1-&gt;4)-beta-D-glucosyl](n) + UDP-alpha-D-glucose = [(1-&gt;4)-beta-D-glucosyl](n+1) + UDP + H(+). The protein operates within glycan metabolism; bacterial cellulose biosynthesis. Activated by bis-(3'-5') cyclic diguanylic acid (c-di-GMP). Functionally, catalytic subunit of cellulose synthase. It polymerizes uridine 5'-diphosphate glucose to cellulose, which is produced as an extracellular component responsible for the structural integrity and rigidity of self-supporting mats characteristic of the 'wrinkly spreader' phenotype. The chain is Cellulose synthase catalytic subunit [UDP-forming] (bcsA) from Pseudomonas fluorescens (strain SBW25).